The sequence spans 309 residues: Porphobilinogen deaminase (309 aa).

Cys-241 carries the post-translational modification S-(dipyrrolylmethanemethyl)cysteine.

The protein belongs to the HMBS family. As to quaternary structure, monomer. Dipyrromethane serves as cofactor.

It carries out the reaction 4 porphobilinogen + H2O = hydroxymethylbilane + 4 NH4(+). The protein operates within porphyrin-containing compound metabolism; protoporphyrin-IX biosynthesis; coproporphyrinogen-III from 5-aminolevulinate: step 2/4. Tetrapolymerization of the monopyrrole PBG into the hydroxymethylbilane pre-uroporphyrinogen in several discrete steps. This Bacillus cereus (strain G9842) protein is Porphobilinogen deaminase.